Consider the following 282-residue polypeptide: MMSVTNNLKVTAGDGASKVSFCNTERFSLIAGPCQMESRDHAFMIAGVLKELCDSLGIGLVYKSSFDKANRTSLSGKRGIGLDSAMEIFADLKKEFGFPVLSDIHTEEQCAIVSEVVDVLQIPAFLSRQTDLLVAAAKTGRVINVKKGQFLAPWDMKNVLAKLNESGNPNVLLCERGASFGYNTLVSDMRSLPIMASLGAPVIFDATHSVQQPGGQGGSTGGQREFVETLARAAVAVGVAGLFIETHEDPDNAPSDGPNMVHLKDMPKLLEKLLAFDAITKA.

Belongs to the KdsA family.

It localises to the cytoplasm. It carries out the reaction D-arabinose 5-phosphate + phosphoenolpyruvate + H2O = 3-deoxy-alpha-D-manno-2-octulosonate-8-phosphate + phosphate. It functions in the pathway carbohydrate biosynthesis; 3-deoxy-D-manno-octulosonate biosynthesis; 3-deoxy-D-manno-octulosonate from D-ribulose 5-phosphate: step 2/3. It participates in bacterial outer membrane biogenesis; lipopolysaccharide biosynthesis. The sequence is that of 2-dehydro-3-deoxyphosphooctonate aldolase from Agrobacterium fabrum (strain C58 / ATCC 33970) (Agrobacterium tumefaciens (strain C58)).